The following is a 471-amino-acid chain: Putative multidrug resistance protein MdtD (471 aa).

The Periplasmic segment spans residues 1-11 (MTDLPDSTRWQ). Residues 12–32 (LWIVAFGFFMQSLDTTIVNTA) traverse the membrane as a helical segment. Residues 33 to 48 (LPSMAQSLGESPLHMH) are Cytoplasmic-facing. Residues 49-69 (MVIVSYVLTVAVMLPASGWLA) traverse the membrane as a helical segment. The Periplasmic segment spans residues 70–76 (DKVGVRN). The chain crosses the membrane as a helical span at residues 77 to 97 (IFFTAIVLFTLGSLFCALSGT). The Cytoplasmic portion of the chain corresponds to 98–101 (LNEL). Residues 102-124 (LLARALQGVGGAMMVPVGRLTVM) form a helical membrane-spanning segment. Residues 125–137 (KIVPREQYMAAMT) are Periplasmic-facing. The helical transmembrane segment at 138-158 (FVTLPGQVGPLLGPALGGLLV) threads the bilayer. The Cytoplasmic segment spans residues 159 to 164 (EYASWH). Residues 165-185 (WIFLINIPVGIIGAIATLLLM) traverse the membrane as a helical segment. Over 186–196 (PNYTMQTWRFD) the chain is Periplasmic. Residues 197–217 (LSGFLLLAVGMAVLTLALDGS) form a helical membrane-spanning segment. Over 218–224 (KGTGLSP) the chain is Cytoplasmic. A helical transmembrane segment spans residues 225-245 (LAIAGLVAVGVVALVLYLLHA). The Periplasmic portion of the chain corresponds to 246 to 262 (RNNNRALFSLKLFRTRT). A helical membrane pass occupies residues 263-283 (FSLGLAGSFAGRIGSGMLPFM). Residues 284–285 (TP) are Cytoplasmic-facing. The chain crosses the membrane as a helical span at residues 286-306 (VFLQIGLGFSPFHAGLMMIPM). Over 307-341 (VLGSMGMKRIVVQVVNRFGYRRVLVATTLGLSLVT) the chain is Periplasmic. Residues 342 to 362 (LLFMTTALLGWYYVLPFVLFL) form a helical membrane-spanning segment. The Cytoplasmic segment spans residues 363 to 395 (QGMVNSTRFSSMNTLTLKDLPDNLASSGNSLLS). A helical transmembrane segment spans residues 396-416 (MIMQLSMSIGVTIAGLLLGLF). The Periplasmic portion of the chain corresponds to 417–430 (GSQHVSVDSGTTQT). A helical membrane pass occupies residues 431-451 (VFMYTWLSMALIIALPAFIFA). Residues 452–471 (RVPNDTHQNVAISRRKRSAQ) are Cytoplasmic-facing.

Belongs to the major facilitator superfamily. TCR/Tet family.

It is found in the cell inner membrane. The chain is Putative multidrug resistance protein MdtD from Shigella boydii serotype 4 (strain Sb227).